Reading from the N-terminus, the 263-residue chain is MASPAALRPSMGAIMQTCRSAATAPKVAVAVPVRALSTSAALLKRHKYPTARVTRDNSKQRGESALRKSGTRWKLSVSDEPLPEPVPREELPPIQVDENHGLWDFFYDRETVAMAPLEHTKHGRAWTVSELRKKSWDDLHRLWWVCVKERNRIATANWERTKSELGFGLAEANERDRNVKQTMRGIKHVLTERFYAWEDAVKLAEQDPEIDLSNPENPYTPSTFLEAEETAEGAEASETQSTTTEIDPTTIPSSKSQAEAPRV.

Disordered stretches follow at residues 51–92 (ARVT…EELP) and 208–263 (PEID…APRV). Over residues 53-66 (VTRDNSKQRGESAL) the composition is skewed to basic and acidic residues. Over residues 214–223 (NPENPYTPST) the composition is skewed to polar residues. Residues 233-245 (GAEASETQSTTTE) are compositionally biased toward low complexity. The segment covering 246 to 257 (IDPTTIPSSKSQ) has biased composition (polar residues).

The protein belongs to the universal ribosomal protein uL29 family. Component of the mitochondrial large ribosomal subunit (mt-LSU). Mature N.crassa 74S mitochondrial ribosomes consist of a small (37S) and a large (54S) subunit. The 37S small subunit contains a 16S ribosomal RNA (16S mt-rRNA) and 32 different proteins. The 54S large subunit contains a 23S rRNA (23S mt-rRNA) and 42 different proteins.

Its subcellular location is the mitochondrion. Functionally, component of the mitochondrial ribosome (mitoribosome), a dedicated translation machinery responsible for the synthesis of mitochondrial genome-encoded proteins, including at least some of the essential transmembrane subunits of the mitochondrial respiratory chain. The mitoribosomes are attached to the mitochondrial inner membrane and translation products are cotranslationally integrated into the membrane. The chain is Large ribosomal subunit protein uL29m (mrpl4) from Neurospora crassa (strain ATCC 24698 / 74-OR23-1A / CBS 708.71 / DSM 1257 / FGSC 987).